A 163-amino-acid chain; its full sequence is ATP synthase subunit b 1 (163 aa).

Residues Leu6 to Gly26 traverse the membrane as a helical segment.

It belongs to the ATPase B chain family. F-type ATPases have 2 components, F(1) - the catalytic core - and F(0) - the membrane proton channel. F(1) has five subunits: alpha(3), beta(3), gamma(1), delta(1), epsilon(1). F(0) has three main subunits: a(1), b(2) and c(10-14). The alpha and beta chains form an alternating ring which encloses part of the gamma chain. F(1) is attached to F(0) by a central stalk formed by the gamma and epsilon chains, while a peripheral stalk is formed by the delta and b chains.

It localises to the cell inner membrane. Functionally, f(1)F(0) ATP synthase produces ATP from ADP in the presence of a proton or sodium gradient. F-type ATPases consist of two structural domains, F(1) containing the extramembraneous catalytic core and F(0) containing the membrane proton channel, linked together by a central stalk and a peripheral stalk. During catalysis, ATP synthesis in the catalytic domain of F(1) is coupled via a rotary mechanism of the central stalk subunits to proton translocation. Component of the F(0) channel, it forms part of the peripheral stalk, linking F(1) to F(0). This chain is ATP synthase subunit b 1, found in Xanthobacter autotrophicus (strain ATCC BAA-1158 / Py2).